Reading from the N-terminus, the 506-residue chain is Xaa-Pro aminopeptidase 3 (506 aa).

Residues 1–31 (MLSLLSTPRLVPVIARLRGLSGCMSCLQRRY) constitute a mitochondrion transit peptide. Positions 54–79 (HPHLLRPGEVTPGLSQVEYALRRHKL) are interaction with TNFRSF1B. Tyr300, Asp331, Asp342, His423, His430, Glu450, and Glu474 together coordinate substrate. 3 residues coordinate Mn(2+): Asp331, Asp342, and His423. Glu450 and Glu474 together coordinate Mn(2+).

It belongs to the peptidase M24B family. As to quaternary structure, homodimer. Interacts with TNFRSF1B/TNFR2 (activated) and TRAF2. Mn(2+) is required as a cofactor. In terms of tissue distribution, expressed in the kidney, specifically in intercalated cells, but not in principal cells, of the distal convoluted tubule and cortical collecting duct (at protein level).

It is found in the mitochondrion. The protein localises to the cytoplasm. The catalysed reaction is Release of any N-terminal amino acid, including proline, that is linked to proline, even from a dipeptide or tripeptide.. Functionally, catalyzes the removal of a penultimate prolyl residue from the N-termini of peptides, such as Leu-Pro-Ala. Also shows low activity towards peptides with Ala or Ser at the P1 position. Promotes TNFRSF1B-mediated phosphorylation of MAPK8/JNK1 and MAPK9/JNK2, suggesting a function as an adapter protein for TNFRSF1B; the effect is independent of XPNPEP3 peptidase activity. May inhibit apoptotic cell death induced via TNF-TNFRSF1B signaling. The sequence is that of Xaa-Pro aminopeptidase 3 (Xpnpep3) from Rattus norvegicus (Rat).